We begin with the raw amino-acid sequence, 183 residues long: Non-classical export protein 2 homolog (183 aa).

Over 1 to 8 (MVGIRQYG) the chain is Cytoplasmic. Residues 9–29 (VFTWVFRTFQLAIDTIVLALA) traverse the membrane as a helical segment. Residues 30–44 (SALVNQQTSGGSPGK) are Extracellular-facing. The helical transmembrane segment at 45 to 65 (INFSVAVGSFAILTFFLTAVG) threads the bilayer. Topologically, residues 66-75 (RFLPTILGNP) are cytoplasmic. Residues 76 to 96 (WLIAFYDFVNWVFALTGGCCI) traverse the membrane as a helical segment. Residues 97–131 (AVAIRVHACDNQKYLDRNHYTQGSMRRCQELKALC) lie on the Extracellular side of the membrane. A helical membrane pass occupies residues 132-152 (FFLWFMFGLYVASFIVQIFIA). Topologically, residues 153–183 (KNDTPNYTFRGRGRGKGSGPAVAPRPVMSAV) are cytoplasmic. Positions 163 to 183 (GRGRGKGSGPAVAPRPVMSAV) are disordered.

Belongs to the NCE102 family.

It is found in the cytoplasm. It localises to the golgi apparatus membrane. Its subcellular location is the cell membrane. Its function is as follows. Involved in membrane organization and might act as a sensor of sphingolipids that regulates plasma membrane function. Involved in a novel pathway of export of proteins that lack a cleavable signal sequence. The chain is Non-classical export protein 2 homolog (fhn1) from Schizosaccharomyces pombe (strain 972 / ATCC 24843) (Fission yeast).